Reading from the N-terminus, the 922-residue chain is Non-centrosomal microtubule array protein 1 (922 aa).

The segment covering 1–10 (MSNERVSTGS) has biased composition (polar residues). Disordered regions lie at residues 1–134 (MSNE…HLPP), 250–277 (PVRL…TVPR), 465–491 (KSRH…QMNL), and 533–563 (TQKE…SNLS). Composition is skewed to basic and acidic residues over residues 43-54 (SMERKDMPDRPK) and 70-94 (PKDR…KECA). The span at 99–113 (SNTSSEHSSRSNSST) shows a compositional bias: low complexity. 2 stretches are compositionally biased toward basic and acidic residues: residues 256–276 (RGDT…DTVP) and 468–484 (HLSE…ERRG). The segment covering 539-563 (SHSTPSQSRHSSSKSSHFNGSSNLS) has biased composition (low complexity). Residues 564-728 (TSEQLRLQEM…RSVSTLRLEQ (165 aa)) adopt a coiled-coil conformation.

Its subcellular location is the cytoplasm. The protein localises to the cytoskeleton. It is found in the apical cell membrane. It localises to the cell junction. The protein resides in the hemidesmosome. Its subcellular location is the adherens junction. Plays a role in the assembly of microtubule arrays in the germline acting redundantly with ptrn-1 to control circumferential microtubule assembly along the body which is necessary for larval development, viability, and morphology and integrity of the epidermis. Required for microtubule stability and anchorage by binding to microtubule minus ends. Recruited to hemidesomosomes in early embryonic elongation to direct the nucleation and growth of non-centrosomal microtubules. Its function is as follows. Required for normal nuclear migration in the embryonic epidermis. In terms of biological role, directs the assembly of non-centrosomal microtubule arrays that determine the position of nuclei within intracellular compartments in the epidermis and this is independent of ptrn-1 activity. This is Non-centrosomal microtubule array protein 1 from Caenorhabditis elegans.